Consider the following 432-residue polypeptide: uncharacterized protein (432 aa).

The protein to M.jannaschii MJ0977.

This is an uncharacterized protein from Methanocaldococcus jannaschii (strain ATCC 43067 / DSM 2661 / JAL-1 / JCM 10045 / NBRC 100440) (Methanococcus jannaschii).